The sequence spans 696 residues: DNA-directed RNA polymerase subunit beta' (696 aa).

Zn(2+) is bound by residues cysteine 69, cysteine 71, cysteine 87, and cysteine 90. Residues aspartate 504, aspartate 506, and aspartate 508 each contribute to the Mg(2+) site.

The protein belongs to the RNA polymerase beta' chain family. RpoC1 subfamily. In plastids the minimal PEP RNA polymerase catalytic core is composed of four subunits: alpha, beta, beta', and beta''. When a (nuclear-encoded) sigma factor is associated with the core the holoenzyme is formed, which can initiate transcription. Mg(2+) is required as a cofactor. Zn(2+) serves as cofactor.

Its subcellular location is the plastid. The protein resides in the chloroplast. The enzyme catalyses RNA(n) + a ribonucleoside 5'-triphosphate = RNA(n+1) + diphosphate. In terms of biological role, DNA-dependent RNA polymerase catalyzes the transcription of DNA into RNA using the four ribonucleoside triphosphates as substrates. The chain is DNA-directed RNA polymerase subunit beta' from Pinus koraiensis (Korean pine).